We begin with the raw amino-acid sequence, 343 residues long: F-box/kelch-repeat protein At3g08810 (343 aa).

A compositionally biased stretch (basic residues) spans 1–15; sequence MSYPERKRKRSRWSK. The tract at residues 1–25 is disordered; that stretch reads MSYPERKRKRSRWSKPHSTQNPSPS. In terms of domain architecture, F-box spans 20 to 66; sequence QNPSPSLPDDVLLSIFARVSRLYYPTLSHVSESFRSLLASPELYKAR. 3 Kelch repeats span residues 134-181, 183-224, and 225-271; these read DIYN…VRDG, QGGH…LPDS, and YCVI…VILA.

The polypeptide is F-box/kelch-repeat protein At3g08810 (Arabidopsis thaliana (Mouse-ear cress)).